We begin with the raw amino-acid sequence, 315 residues long: Nucleotide-binding protein PsycPRwf_2129 (315 aa).

29–36 (GRSGSGKT) is a binding site for ATP. Position 79–82 (79–82 (DIRT)) interacts with GTP.

This sequence belongs to the RapZ-like family.

In terms of biological role, displays ATPase and GTPase activities. The protein is Nucleotide-binding protein PsycPRwf_2129 of Psychrobacter sp. (strain PRwf-1).